A 200-amino-acid polypeptide reads, in one-letter code: MTRSSRFLGTASPPPPEEILAAETDMVVILSALLCALVCVAGLAAVARCAWLRRLTGVNPAAVGEAPPPNKGLKKKALQALPKSTYTASASTAAAADDLPCSSVGDGDSSTECAICITEFSEGEEIRILPLCSHAFHVACIDKWLTSRSSCPSCRRILVPVKCDRCGHHASTAETQVKDQPPHHQHPSQFTSAIIPAFLP.

The helical transmembrane segment at 26 to 46 (MVVILSALLCALVCVAGLAAV) threads the bilayer. Residues 113 to 155 (CAICITEFSEGEEIRILPLCSHAFHVACIDKWLTSRSSCPSCR) form an RING-type; atypical zinc finger.

This sequence belongs to the RING-type zinc finger family. ATL subfamily. Interacts with BIK1.

The protein localises to the membrane. The catalysed reaction is S-ubiquitinyl-[E2 ubiquitin-conjugating enzyme]-L-cysteine + [acceptor protein]-L-lysine = [E2 ubiquitin-conjugating enzyme]-L-cysteine + N(6)-ubiquitinyl-[acceptor protein]-L-lysine.. It functions in the pathway protein modification; protein ubiquitination. In terms of biological role, E3 ubiquitin-protein ligase that possess E3 ubiquitin ligase activity in vitro and mediates protein monoubiquitination. Triggers the monoubiquitination of phosphorylated BIK1 in response to pathogen-associated molecular pattern (PAMP) detection. May be involved in the early steps of the plant defense signaling pathway. The chain is Probable E3 ubiquitin-protein ligase ATL45 from Arabidopsis thaliana (Mouse-ear cress).